We begin with the raw amino-acid sequence, 91 residues long: Small ribosomal subunit protein uS19 (91 aa).

This sequence belongs to the universal ribosomal protein uS19 family.

Its function is as follows. Protein S19 forms a complex with S13 that binds strongly to the 16S ribosomal RNA. This is Small ribosomal subunit protein uS19 from Janthinobacterium sp. (strain Marseille) (Minibacterium massiliensis).